A 745-amino-acid polypeptide reads, in one-letter code: Myeloperoxidase (745 aa).

A signal peptide spans 1–48 (MGVPFFSSLRCMVDLGPCWAGGLTAEMKLLLALAGLLAILATPQPSEG). A glycan (N-linked (GlcNAc...) asparagine) is linked at N139. The cysteines at positions 167 and 180 are disulfide-linked. D260 is a binding site for heme b. The Proton acceptor role is filled by H261. D262 contacts Ca(2+). 2 disulfides stabilise this stretch: C281–C291 and C285–C309. At C316 the chain carries Cysteine sulfenic acid (-SOH). The N-linked (GlcNAc...) asparagine glycan is linked to N323. Residues T334, F336, D338, and S340 each contribute to the Ca(2+) site. N-linked (GlcNAc...) asparagine glycosylation is found at N355 and N391. C387 and C398 are joined by a disulfide. Heme b-binding residues include E408 and M409. N483 is a glycosylation site (N-linked (GlcNAc...) asparagine). H502 provides a ligand contact to heme b. 2 disulfide bridges follow: C606–C663 and C704–C730. Residue N729 is glycosylated (N-linked (GlcNAc...) asparagine).

It belongs to the peroxidase family. XPO subfamily. Homodimer; disulfide-linked. Each monomer consists of a light and a heavy chain. Found in a complex with CP and LTF; interacts directly with CP, which protects CP antioxidant properties by MPO. Requires Ca(2+) as cofactor. The cofactor is heme b.

It is found in the lysosome. The catalysed reaction is chloride + H2O2 + H(+) = hypochlorous acid + H2O. Functionally, part of the host defense system of polymorphonuclear leukocytes. It is responsible for microbicidal activity against a wide range of organisms. In the stimulated PMN, MPO catalyzes the production of hypohalous acids, primarily hypochlorous acid in physiologic situations, and other toxic intermediates that greatly enhance PMN microbicidal activity. Mediates the proteolytic cleavage of alpha-1-microglobulin to form t-alpha-1-microglobulin, which potently inhibits oxidation of low-density lipoprotein particles and limits vascular damage. This is Myeloperoxidase from Homo sapiens (Human).